The chain runs to 314 residues: 4-hydroxy-3-methylbut-2-enyl diphosphate reductase (314 aa).

A [4Fe-4S] cluster-binding site is contributed by Cys-12. (2E)-4-hydroxy-3-methylbut-2-enyl diphosphate-binding residues include His-41 and His-74. Positions 41 and 74 each coordinate dimethylallyl diphosphate. Positions 41 and 74 each coordinate isopentenyl diphosphate. Cys-96 lines the [4Fe-4S] cluster pocket. (2E)-4-hydroxy-3-methylbut-2-enyl diphosphate is bound at residue His-124. His-124 provides a ligand contact to dimethylallyl diphosphate. His-124 lines the isopentenyl diphosphate pocket. Residue Glu-126 is the Proton donor of the active site. Residue Thr-167 coordinates (2E)-4-hydroxy-3-methylbut-2-enyl diphosphate. Cys-197 lines the [4Fe-4S] cluster pocket. (2E)-4-hydroxy-3-methylbut-2-enyl diphosphate-binding residues include Ser-225, Ser-226, Asn-227, and Ser-269. Positions 225, 226, 227, and 269 each coordinate dimethylallyl diphosphate. Residues Ser-225, Ser-226, Asn-227, and Ser-269 each contribute to the isopentenyl diphosphate site.

This sequence belongs to the IspH family. [4Fe-4S] cluster is required as a cofactor.

It catalyses the reaction isopentenyl diphosphate + 2 oxidized [2Fe-2S]-[ferredoxin] + H2O = (2E)-4-hydroxy-3-methylbut-2-enyl diphosphate + 2 reduced [2Fe-2S]-[ferredoxin] + 2 H(+). The catalysed reaction is dimethylallyl diphosphate + 2 oxidized [2Fe-2S]-[ferredoxin] + H2O = (2E)-4-hydroxy-3-methylbut-2-enyl diphosphate + 2 reduced [2Fe-2S]-[ferredoxin] + 2 H(+). It functions in the pathway isoprenoid biosynthesis; dimethylallyl diphosphate biosynthesis; dimethylallyl diphosphate from (2E)-4-hydroxy-3-methylbutenyl diphosphate: step 1/1. The protein operates within isoprenoid biosynthesis; isopentenyl diphosphate biosynthesis via DXP pathway; isopentenyl diphosphate from 1-deoxy-D-xylulose 5-phosphate: step 6/6. In terms of biological role, catalyzes the conversion of 1-hydroxy-2-methyl-2-(E)-butenyl 4-diphosphate (HMBPP) into a mixture of isopentenyl diphosphate (IPP) and dimethylallyl diphosphate (DMAPP). Acts in the terminal step of the DOXP/MEP pathway for isoprenoid precursor biosynthesis. The chain is 4-hydroxy-3-methylbut-2-enyl diphosphate reductase from Mannheimia succiniciproducens (strain KCTC 0769BP / MBEL55E).